We begin with the raw amino-acid sequence, 306 residues long: Elongation factor Ts (306 aa).

The tract at residues 81-84 (TDFV) is involved in Mg(2+) ion dislocation from EF-Tu.

The protein belongs to the EF-Ts family.

The protein resides in the cytoplasm. Functionally, associates with the EF-Tu.GDP complex and induces the exchange of GDP to GTP. It remains bound to the aminoacyl-tRNA.EF-Tu.GTP complex up to the GTP hydrolysis stage on the ribosome. The polypeptide is Elongation factor Ts (Polaromonas naphthalenivorans (strain CJ2)).